A 96-amino-acid polypeptide reads, in one-letter code: Protein transport protein Sec61 subunit beta (96 aa).

Positions 1–17 (MPGPTPSGTNVGSSGRS) are enriched in polar residues. The disordered stretch occupies residues 1–54 (MPGPTPSGTNVGSSGRSPSKAVAARAAGSTVRQRKNASCGTRSAGRTTSAGTGG). An N-acetylproline modification is found at P2. At 2 to 70 (PGPTPSGTNV…EDSPGLKVGP (69 aa)) the chain is on the cytoplasmic side. Position 7 is a phosphoserine (S7). A Phosphothreonine modification is found at T9. Residues S13, S14, and S17 each carry the phosphoserine modification. Residue C39 is the site of S-palmitoyl cysteine attachment. Residues 40–50 (GTRSAGRTTSA) are compositionally biased toward low complexity. The helical transmembrane segment at 71–91 (VPVLVMSLLFIAAVFMLHIWG) threads the bilayer.

This sequence belongs to the SEC61-beta family. In terms of assembly, the SEC61 channel-forming translocon complex consists of channel-forming core components SEC61A1, SEC61B and SEC61G and different auxiliary components such as SEC62 and SEC63. The SEC61 channel associates with the multi-pass translocon (MPT) complex. Interacts with TRAM1.

It is found in the endoplasmic reticulum membrane. Component of SEC61 channel-forming translocon complex that mediates transport of signal peptide-containing precursor polypeptides across the endoplasmic reticulum (ER). Forms a ribosome receptor and a gated pore in the ER membrane, both functions required for cotranslational translocation of nascent polypeptides. The SEC61 channel is also involved in ER membrane insertion of transmembrane proteins: it mediates membrane insertion of the first few transmembrane segments of proteins, while insertion of subsequent transmembrane regions of multi-pass membrane proteins is mediated by the multi-pass translocon (MPT) complex. The SEC61 channel cooperates with the translocating protein TRAM1 to import nascent proteins into the ER. Required for PKD1/Polycystin-1 biogenesis. The polypeptide is Protein transport protein Sec61 subunit beta (Mus musculus (Mouse)).